The chain runs to 328 residues: Cytochrome f (328 aa).

Residues 1 to 44 (MRNPDTLGLWTKTMVALRRFTVLAIATVSVFLITDLGLPQAASA) form the signal peptide. Heme contacts are provided by tyrosine 45, cysteine 66, cysteine 69, and histidine 70. A helical membrane pass occupies residues 296–313 (FLVLFLAGIMLSQILLVL).

It belongs to the cytochrome f family. In terms of assembly, the 4 large subunits of the cytochrome b6-f complex are cytochrome b6, subunit IV (17 kDa polypeptide, PetD), cytochrome f and the Rieske protein, while the 4 small subunits are PetG, PetL, PetM and PetN. The complex functions as a dimer. The cofactor is heme.

Its subcellular location is the cellular thylakoid membrane. Its function is as follows. Component of the cytochrome b6-f complex, which mediates electron transfer between photosystem II (PSII) and photosystem I (PSI), cyclic electron flow around PSI, and state transitions. This Synechocystis sp. (strain ATCC 27184 / PCC 6803 / Kazusa) protein is Cytochrome f (petA).